Reading from the N-terminus, the 339-residue chain is Ketol-acid reductoisomerase (NADP(+)) (339 aa).

The 182-residue stretch at 1–182 (MPNRYYEKDG…GCLKAGVIDT (182 aa)) folds into the KARI N-terminal Rossmann domain. NADP(+) contacts are provided by residues 25–28 (YGSQ), Ser-51, Ser-53, and 83–86 (DHIQ). His-108 is an active-site residue. Gly-134 contributes to the NADP(+) binding site. A KARI C-terminal knotted domain is found at 183–328 (NFREETESDL…RELREMMTFL (146 aa)). Mg(2+)-binding residues include Asp-191, Glu-195, Glu-227, and Glu-231. Residue Ser-252 coordinates substrate.

The protein belongs to the ketol-acid reductoisomerase family. The cofactor is Mg(2+).

It carries out the reaction (2R)-2,3-dihydroxy-3-methylbutanoate + NADP(+) = (2S)-2-acetolactate + NADPH + H(+). The catalysed reaction is (2R,3R)-2,3-dihydroxy-3-methylpentanoate + NADP(+) = (S)-2-ethyl-2-hydroxy-3-oxobutanoate + NADPH + H(+). The protein operates within amino-acid biosynthesis; L-isoleucine biosynthesis; L-isoleucine from 2-oxobutanoate: step 2/4. It participates in amino-acid biosynthesis; L-valine biosynthesis; L-valine from pyruvate: step 2/4. Its function is as follows. Involved in the biosynthesis of branched-chain amino acids (BCAA). Catalyzes an alkyl-migration followed by a ketol-acid reduction of (S)-2-acetolactate (S2AL) to yield (R)-2,3-dihydroxy-isovalerate. In the isomerase reaction, S2AL is rearranged via a Mg-dependent methyl migration to produce 3-hydroxy-3-methyl-2-ketobutyrate (HMKB). In the reductase reaction, this 2-ketoacid undergoes a metal-dependent reduction by NADPH to yield (R)-2,3-dihydroxy-isovalerate. The chain is Ketol-acid reductoisomerase (NADP(+)) from Solibacter usitatus (strain Ellin6076).